The chain runs to 180 residues: Inner membrane assembly complex subunit 17 (180 aa).

The N-terminal 36 residues, 1 to 36 (MMIRNQLYRKCIIGGGRSILNGWVINGTVPNIGLRY), are a transit peptide targeting the mitochondrion. At 37-105 (LRSGIVTRSN…RKTQDIPIKR (69 aa)) the chain is on the mitochondrial matrix side. A helical transmembrane segment spans residues 106–128 (FIRPTWMFLLMSSTFYLLGHYIW). Residues 129-163 (WKLEYDEVEKELDRQVTALEEELHNLIEEHRVHGE) adopt a coiled-coil conformation. Residues 129 to 180 (WKLEYDEVEKELDRQVTALEEELHNLIEEHRVHGENEAIKNKKHKHWYKFWS) are Mitochondrial intermembrane-facing.

Belongs to the INA17 family. As to quaternary structure, component of the inner membrane assembly (INA) complex, composed of INA17 and INA22. Interacts with a subset of F(1)F(0)-ATP synthase subunits of the F(1)-domain and the peripheral stalk.

Its subcellular location is the mitochondrion inner membrane. In terms of biological role, component of the INA complex (INAC) that promotes the biogenesis of mitochondrial F(1)F(0)-ATP synthase. INAC facilitates the assembly of the peripheral stalk and promotes the assembly of the catalytic F(1)-domain with the membrane-embedded F(0)-domain. This Vanderwaltozyma polyspora (strain ATCC 22028 / DSM 70294 / BCRC 21397 / CBS 2163 / NBRC 10782 / NRRL Y-8283 / UCD 57-17) (Kluyveromyces polysporus) protein is Inner membrane assembly complex subunit 17.